A 280-amino-acid chain; its full sequence is Pantothenate synthetase (280 aa).

Position 31–38 (31–38 (MGNLHAGH)) interacts with ATP. His-38 serves as the catalytic Proton donor. Position 62 (Gln-62) interacts with (R)-pantoate. A beta-alanine-binding site is contributed by Gln-62. ATP is bound at residue 150-153 (GKKD). Gln-156 lines the (R)-pantoate pocket. ATP is bound by residues Val-179 and 187–190 (MSSR).

It belongs to the pantothenate synthetase family. In terms of assembly, homodimer.

Its subcellular location is the cytoplasm. It catalyses the reaction (R)-pantoate + beta-alanine + ATP = (R)-pantothenate + AMP + diphosphate + H(+). The protein operates within cofactor biosynthesis; (R)-pantothenate biosynthesis; (R)-pantothenate from (R)-pantoate and beta-alanine: step 1/1. Catalyzes the condensation of pantoate with beta-alanine in an ATP-dependent reaction via a pantoyl-adenylate intermediate. This is Pantothenate synthetase from Xanthomonas axonopodis pv. citri (strain 306).